Here is a 494-residue protein sequence, read N- to C-terminus: Cardiolipin synthase (494 aa).

The next 2 membrane-spanning stretches (helical) occupy residues 14 to 34 and 45 to 65; these read IILN…AFTI and IWAW…LYLL. 2 PLD phosphodiesterase domains span residues 229–256 and 407–434; these read MNNR…GDEY and DNGF…DHRS. Residues His234, Lys236, Asp241, His412, Lys414, and Asp419 contribute to the active site.

It belongs to the phospholipase D family. Cardiolipin synthase subfamily.

It localises to the cell membrane. The catalysed reaction is 2 a 1,2-diacyl-sn-glycero-3-phospho-(1'-sn-glycerol) = a cardiolipin + glycerol. Its function is as follows. Catalyzes the reversible phosphatidyl group transfer from one phosphatidylglycerol molecule to another to form cardiolipin (CL) (diphosphatidylglycerol) and glycerol. In Staphylococcus aureus (strain Mu50 / ATCC 700699), this protein is Cardiolipin synthase (cls).